The chain runs to 88 residues: Homeobox protein knotted-1-like 3 (88 aa).

Positions 4–24 (ELKKQLLRKYSGCLGNLRKEL) constitute an ELK domain. The homeobox; TALE-type DNA-binding region spans 25–88 (CKKRKKDKLP…NQRKRHWKPS (64 aa)).

It belongs to the TALE/KNOX homeobox family. In terms of tissue distribution, strongly expressed in ear inflorescence primordia and shoot meristem. Weakly expressed in embryos. Absent from leaves.

It localises to the nucleus. Probably binds to the DNA sequence 5'-TGAC-3'. In Zea mays (Maize), this protein is Homeobox protein knotted-1-like 3 (KNOX3).